We begin with the raw amino-acid sequence, 930 residues long: Translation initiation factor IF-2 (930 aa).

The span at 50-67 (FKPAAAPKVEAKPAAPKV) shows a compositional bias: low complexity. Disordered stretches follow at residues 50-217 (FKPA…SSEE) and 260-346 (EVVP…HELP). Basic and acidic residues-rich tracts occupy residues 68–90 (SAEK…EAKP) and 110–125 (FKAE…AERR). Residues 129–141 (KGNNRDQQQNGNR) show a composition bias toward low complexity. Composition is skewed to basic and acidic residues over residues 157–167 (RDNRRFNDQAK) and 262–295 (VPEK…DGPR). A compositionally biased stretch (low complexity) spans 309–318 (NQKNSNWNNN). Basic and acidic residues predominate over residues 337-346 (VTERKFHELP). Positions 432–599 (ERPPVVTIMG…TVLLVAEIQE (168 aa)) constitute a tr-type G domain. Positions 441–448 (GHVDHGKT) are G1. Residue 441–448 (GHVDHGKT) participates in GTP binding. A G2 region spans residues 466 to 470 (GITQH). The segment at 487-490 (DTPG) is G3. GTP-binding positions include 487–491 (DTPGH) and 541–544 (NKID). Residues 541–544 (NKID) form a G4 region. The interval 577–579 (SAK) is G5.

Belongs to the TRAFAC class translation factor GTPase superfamily. Classic translation factor GTPase family. IF-2 subfamily.

The protein localises to the cytoplasm. In terms of biological role, one of the essential components for the initiation of protein synthesis. Protects formylmethionyl-tRNA from spontaneous hydrolysis and promotes its binding to the 30S ribosomal subunits. Also involved in the hydrolysis of GTP during the formation of the 70S ribosomal complex. The polypeptide is Translation initiation factor IF-2 (Streptococcus pneumoniae (strain CGSP14)).